A 267-amino-acid polypeptide reads, in one-letter code: Glutamate 5-kinase (267 aa).

Lys14 contributes to the ATP binding site. Substrate contacts are provided by Ser54, Asp141, and Asn157. ATP is bound by residues 177 to 178 and 219 to 225; these read SD and TGGMLSK.

This sequence belongs to the glutamate 5-kinase family.

The protein resides in the cytoplasm. The enzyme catalyses L-glutamate + ATP = L-glutamyl 5-phosphate + ADP. Its pathway is amino-acid biosynthesis; L-proline biosynthesis; L-glutamate 5-semialdehyde from L-glutamate: step 1/2. Functionally, catalyzes the transfer of a phosphate group to glutamate to form L-glutamate 5-phosphate. This is Glutamate 5-kinase from Streptococcus agalactiae serotype Ia (strain ATCC 27591 / A909 / CDC SS700).